Consider the following 334-residue polypeptide: N-chimaerin (334 aa).

Positions 1 to 10 (MPSKESWSGR) are enriched in polar residues. Residues 1-22 (MPSKESWSGRKTNRATVHKSKQ) form a disordered region. Phosphothreonine is present on Thr67. The Phorbol-ester/DAG-type zinc-finger motif lies at 80–130 (VHNFKVHTFRGPHWCEYCANFMWGLIAQGVKCADCGLNVHKQCSKMVPNDC). Positions 143–334 (CDLTTLVKAR…LLIKNEDILF (192 aa)) constitute a Rho-GAP domain. Thr215 is subject to Phosphothreonine.

In terms of assembly, interacts with EPHA4; effector of EPHA4 in axon guidance linking EPHA4 activation to RAC1 regulation. Post-translationally, phosphorylated. Phosphorylation is EPHA4 kinase activity-dependent.

Functionally, GTPase-activating protein for p21-rac and a phorbol ester receptor. Involved in the assembly of neuronal locomotor circuits as a direct effector of EPHA4 in axon guidance. This is N-chimaerin (CHN1) from Bos taurus (Bovine).